We begin with the raw amino-acid sequence, 310 residues long: M1-specific T cell receptor beta chain (310 aa).

The first 21 residues, 1-21 (MSNQVLCCVVLCLLGANTVDG), serve as a signal peptide directing secretion. The segment at 22-114 (GITQSPKYLF…TAFYLCASSI (93 aa)) is t cell receptor beta variable 19. In terms of domain architecture, Ig-like V-type spans 34 to 131 (EGQNVTLSCE…FGPGTRLTVT (98 aa)). Asn-37 carries an N-linked (GlcNAc...) asparagine glycan. Residues Cys-42 and Cys-110 are joined by a disulfide bond. The segment at 46–50 (LNHDA) is CDR1. Asp-49 serves as a coordination point for a peptide antigen. The segment at 68–73 (SQIVND) is CDR2. The CDR3 stretch occupies residues 110-122 (CASSIRSSYEQYF). The segment at 117–131 (SYEQYFGPGTRLTVT) is t cell receptor beta joining 2-7. The t cell receptor beta constant 2 stretch occupies residues 133–310 (DLKNVFPPKV…AMVKRKDSRG (178 aa)). Residues 140–249 (PKVAVFEPSE…WTQDRAKPVT (110 aa)) enclose the Ig-like C1-type domain. Cys-162 and Cys-227 are joined by a disulfide. A glycan (N-linked (GlcNAc...) asparagine) is linked at Asn-201. A connecting peptide region spans residues 262–276 (CGFTSESYQQGVLSA). Residues 277-299 (TILYEILLGKATLYAVLVSALVL) form a helical membrane-spanning segment. Residues 300–310 (MAMVKRKDSRG) are Cytoplasmic-facing.

As to quaternary structure, disulfide-linked heterodimer with TRAV27*01J42*01C*01 alpha chain. The TR primarily interacts via its CDR3-beta domain with M/matrix protein 1-derived peptide (GILGFVFTL) displayed by HLA-A*02.01 in a 'peg-notch' recognition mode. The alpha-beta TR associates with the transmembrane signaling CD3 coreceptor proteins to form the TR-CD3 (TCR). The assembly of alpha-beta TR heterodimers with CD3 occurs in the endoplasmic reticulum where a single alpha-beta TR heterodimer associates with one CD3D-CD3E heterodimer, one CD3G-CD3E heterodimer and one CD247 homodimer forming a stable octameric structure. CD3D-CD3E and CD3G-CD3E heterodimers preferentially associate with TR alpha and TR beta chains (via TM domain), respectively. The association of the CD247 homodimer is the last step of TCR assembly in the endoplasmic reticulum and is required for transport to the cell surface. As to expression, expressed in M/matrix protein 1-specific effector memory CD8-positive T cells readily detectable in the peripheral blood, secondary lymphoid organs and lung (primary site of infection) of IAV infected individuals.

It localises to the cell membrane. In terms of biological role, the beta chain of TRAV27*01J42*01C*01/TRBV19*01J2S7*01C*02 alpha-beta T cell receptor (TR) clonotype that is specific for HLA-A*02:01-restricted M/matrix protein 1 immunodominant epitope GILGFVFTL of influenza A virus (IAV). Classified as a public TCR clonotype, it is preferentially selected in effector memory CD8-positive T cells among multiple HLA-A*02:01 carriers/individuals and confers long-lived immunity against IAV infection. Can cross-recognize sporadically emerging IAV variants by molecular mimicry, inducing immunity toward different influenza strains. Antigen recognition initiates TR-CD3 clustering on the cell surface and intracellular activation of LCK that phosphorylates the ITAM motifs of CD3G, CD3D, CD3E and CD247 enabling the recruitment of ZAP70. In turn, ZAP70 phosphorylates LAT, which recruits numerous signaling molecules to form the LAT signalosome. The LAT signalosome propagates signal branching to three major signaling pathways, the calcium, the mitogen-activated protein kinase (MAPK) kinase and the nuclear factor NF-kappa-B (NF-kB) pathways, leading to the mobilization of transcription factors that are critical for gene expression and essential for T cell differentiation into effector/memory T cells. This Homo sapiens (Human) protein is M1-specific T cell receptor beta chain.